A 157-amino-acid chain; its full sequence is Putative pre-16S rRNA nuclease (157 aa).

It belongs to the YqgF nuclease family.

The protein localises to the cytoplasm. Could be a nuclease involved in processing of the 5'-end of pre-16S rRNA. The protein is Putative pre-16S rRNA nuclease of Anaplasma marginale (strain St. Maries).